Here is a 493-residue protein sequence, read N- to C-terminus: Endothelial lipase (493 aa).

An N-terminal signal peptide occupies residues 1-23 (MRDPVFLLGFWSLYCCFPAGSLT). Cys66 and Cys79 are joined by a disulfide. 2 N-linked (GlcNAc...) asparagine glycosylation sites follow: Asn67 and Asn82. Ser171 acts as the Nucleophile in catalysis. The Charge relay system role is filled by Asp195. Cysteines 254 and 274 form a disulfide. The active-site Charge relay system is His276. Disulfide bonds link Cys299-Cys318 and Cys310-Cys313. Position 327-339 (327-339 (KMRKKRNSKMYLK)) interacts with heparin. Positions 349–484 (YHYQLKVHMF…SPGQELWFYK (136 aa)) constitute a PLAT domain. The N-linked (GlcNAc...) asparagine glycan is linked to Asn395. Cys465 and Cys485 are oxidised to a cystine.

Belongs to the AB hydrolase superfamily. Lipase family. As to quaternary structure, head to tail Homodimer. Interacts with apolipoprotein C-2.

It localises to the secreted. The enzyme catalyses a triacylglycerol + H2O = a diacylglycerol + a fatty acid + H(+). It catalyses the reaction a 1,2-diacyl-sn-glycero-3-phosphocholine + H2O = a 2-acyl-sn-glycero-3-phosphocholine + a fatty acid + H(+). The catalysed reaction is 1,2,3-tri-(9Z-octadecenoyl)-glycerol + H2O = di-(9Z)-octadecenoylglycerol + (9Z)-octadecenoate + H(+). It carries out the reaction 1,2,3-tributanoylglycerol + H2O = dibutanoylglycerol + butanoate + H(+). The enzyme catalyses 1,2-dihexadecanoyl-sn-glycero-3-phosphocholine + H2O = hexadecanoyl-sn-glycero-3-phosphocholine + hexadecanoate + H(+). In terms of biological role, exerts both phospholipase and triglyceride lipase activities. More active as a phospholipase than a triglyceride lipase. Hydrolyzes triglycerides, both with short-chain fatty acyl groups (tributyrin) and long-chain fatty acyl groups (triolein) with similar levels of activity toward both types of substrates. Hydrolyzes high density lipoproteins (HDL) more efficiently than other lipoproteins. This Rattus norvegicus (Rat) protein is Endothelial lipase (Lipg).